Here is a 77-residue protein sequence, read N- to C-terminus: Omega-conotoxin-like SO-5 (77 aa).

The N-terminal stretch at 1-22 (MKLTCVMIVAVLLLTACQLITA) is a signal peptide. The propeptide occupies 23–42 (DDSRGTQKHRSLRSTTKVSK). 3 cysteine pairs are disulfide-bonded: Cys-46–Cys-61, Cys-53–Cys-64, and Cys-60–Cys-71.

It belongs to the conotoxin O1 superfamily. In terms of tissue distribution, expressed by the venom duct.

The protein resides in the secreted. Functionally, omega-conotoxins act at presynaptic membranes, they bind and block voltage-gated calcium channels (Cav). The protein is Omega-conotoxin-like SO-5 (SO5) of Conus striatus (Striated cone).